Reading from the N-terminus, the 356-residue chain is Protein pelota homolog (356 aa).

The protein belongs to the eukaryotic release factor 1 family. Pelota subfamily. In terms of assembly, monomer. A divalent metal cation is required as a cofactor.

The protein localises to the cytoplasm. Its function is as follows. May function in recognizing stalled ribosomes, interact with stem-loop structures in stalled mRNA molecules, and effect endonucleolytic cleavage of the mRNA. May play a role in the release non-functional ribosomes and degradation of damaged mRNAs. Has endoribonuclease activity. The chain is Protein pelota homolog from Pyrococcus horikoshii (strain ATCC 700860 / DSM 12428 / JCM 9974 / NBRC 100139 / OT-3).